The sequence spans 410 residues: MEEEYLNPINIFSEIGRLKKVLLHRPGEELENLTPLIMKNFLFDDIPYLKVARQEHEVFVNILKDNSVEIEYVEDLVSEVLASSVALKNKFISQFILEAEIKTDGVINILKDYFSNLTVDNMVSKMISGVAREELKDCEFSLDDWVNGSSLFVIDPMPNVLFTRDPFASIGNGITINKMYTKVRRRETIFAEYIFKYHSAYKENVPIWFNRWEETSLEGGDEFVLNKDLLVIGISERTEAGSVEKLAASLFKNKAPFSTILAFKIPKNRAYMHLDTVFTQIDYSVFTSFTSDDMYFSIYVLTYNSNSNKINIKKEKAKLKDVLSFYLGRKIDIIKCAGGDLIHGAREQWNDGANVLAIAPGEVIAYSRNHVTNKLFEENGIKVHRIPSSELSRGRGGPRCMSMSLVREDI.

Cysteine 400 serves as the catalytic Amidino-cysteine intermediate.

Belongs to the arginine deiminase family.

The protein localises to the cytoplasm. It catalyses the reaction L-arginine + H2O = L-citrulline + NH4(+). The protein operates within amino-acid degradation; L-arginine degradation via ADI pathway; carbamoyl phosphate from L-arginine: step 1/2. The chain is Arginine deiminase (arcA) from Borreliella burgdorferi (strain ATCC 35210 / DSM 4680 / CIP 102532 / B31) (Borrelia burgdorferi).